Here is a 177-residue protein sequence, read N- to C-terminus: B-phycoerythrin beta chain (177 aa).

Residues Lys28, Asn35, Asp39, Cys50, Asp54, Cys61, Asn72, 77 to 78 (RR), Cys82, Arg129, 147 to 148 (SQ), 154 to 158 (PQGDC), and Cys158 each bind (2R,3E)-phycoerythrobilin. Asn72 carries the post-translational modification N4-methylasparagine.

It belongs to the phycobiliprotein family. In terms of assembly, heterotetramer of 2 different alpha chains and 2 identical beta chains. The subunit composition could comprise any combination of 2 out of 4 different alpha units with an invariant beta unit. In terms of processing, contains three covalently linked phycoerythrobilin chromophores.

The protein resides in the plastid. It is found in the chloroplast thylakoid membrane. Its function is as follows. Light-harvesting photosynthetic tetrapyrrole chromophore-protein from the phycobiliprotein complex. In Rhodomonas sp. (strain CS 24) (Chroomonas sp. (strain CS24)), this protein is B-phycoerythrin beta chain (cpeB).